The primary structure comprises 410 residues: Histidine--tRNA ligase (410 aa).

It belongs to the class-II aminoacyl-tRNA synthetase family.

The protein localises to the cytoplasm. The enzyme catalyses tRNA(His) + L-histidine + ATP = L-histidyl-tRNA(His) + AMP + diphosphate + H(+). The protein is Histidine--tRNA ligase of Methanocorpusculum labreanum (strain ATCC 43576 / DSM 4855 / Z).